Here is a 526-residue protein sequence, read N- to C-terminus: 2-succinyl-5-enolpyruvyl-6-hydroxy-3-cyclohexene-1-carboxylate synthase (526 aa).

The protein belongs to the TPP enzyme family. MenD subfamily. In terms of assembly, homodimer. It depends on Mg(2+) as a cofactor. Requires Mn(2+) as cofactor. Thiamine diphosphate is required as a cofactor.

The enzyme catalyses isochorismate + 2-oxoglutarate + H(+) = 5-enolpyruvoyl-6-hydroxy-2-succinyl-cyclohex-3-ene-1-carboxylate + CO2. It functions in the pathway quinol/quinone metabolism; 1,4-dihydroxy-2-naphthoate biosynthesis; 1,4-dihydroxy-2-naphthoate from chorismate: step 2/7. Its pathway is quinol/quinone metabolism; menaquinone biosynthesis. Catalyzes the thiamine diphosphate-dependent decarboxylation of 2-oxoglutarate and the subsequent addition of the resulting succinic semialdehyde-thiamine pyrophosphate anion to isochorismate to yield 2-succinyl-5-enolpyruvyl-6-hydroxy-3-cyclohexene-1-carboxylate (SEPHCHC). In Bdellovibrio bacteriovorus (strain ATCC 15356 / DSM 50701 / NCIMB 9529 / HD100), this protein is 2-succinyl-5-enolpyruvyl-6-hydroxy-3-cyclohexene-1-carboxylate synthase.